The sequence spans 203 residues: Outer-membrane lipoprotein carrier protein (203 aa).

An N-terminal signal peptide occupies residues 1-21 (MKKMAIACALLSSVVASSVWA). A disordered region spans residues 178-203 (QQNGAVDPSKFTFTPPQGVTIDDQRK).

It belongs to the LolA family. In terms of assembly, monomer.

It is found in the periplasm. Its function is as follows. Participates in the translocation of lipoproteins from the inner membrane to the outer membrane. Only forms a complex with a lipoprotein if the residue after the N-terminal Cys is not an aspartate (The Asp acts as a targeting signal to indicate that the lipoprotein should stay in the inner membrane). This chain is Outer-membrane lipoprotein carrier protein, found in Salmonella agona (strain SL483).